We begin with the raw amino-acid sequence, 890 residues long: Alanine--tRNA ligase (890 aa).

Zn(2+) contacts are provided by His573, His577, Cys675, and His679.

This sequence belongs to the class-II aminoacyl-tRNA synthetase family. It depends on Zn(2+) as a cofactor.

Its subcellular location is the cytoplasm. It carries out the reaction tRNA(Ala) + L-alanine + ATP = L-alanyl-tRNA(Ala) + AMP + diphosphate. Catalyzes the attachment of alanine to tRNA(Ala) in a two-step reaction: alanine is first activated by ATP to form Ala-AMP and then transferred to the acceptor end of tRNA(Ala). Also edits incorrectly charged Ser-tRNA(Ala) and Gly-tRNA(Ala) via its editing domain. This Streptomyces avermitilis (strain ATCC 31267 / DSM 46492 / JCM 5070 / NBRC 14893 / NCIMB 12804 / NRRL 8165 / MA-4680) protein is Alanine--tRNA ligase.